Consider the following 440-residue polypeptide: Glutamyl-tRNA reductase (440 aa).

Residues 47–50 (TCNR), S110, 115–117 (ERE), and Q121 contribute to the substrate site. The active-site Nucleophile is the C48. Position 192-197 (192-197 (GTGAYA)) interacts with NADP(+).

The protein belongs to the glutamyl-tRNA reductase family. As to quaternary structure, homodimer.

It catalyses the reaction (S)-4-amino-5-oxopentanoate + tRNA(Glu) + NADP(+) = L-glutamyl-tRNA(Glu) + NADPH + H(+). It functions in the pathway porphyrin-containing compound metabolism; protoporphyrin-IX biosynthesis; 5-aminolevulinate from L-glutamyl-tRNA(Glu): step 1/2. In terms of biological role, catalyzes the NADPH-dependent reduction of glutamyl-tRNA(Glu) to glutamate 1-semialdehyde (GSA). This chain is Glutamyl-tRNA reductase, found in Paenarthrobacter aurescens (strain TC1).